A 299-amino-acid chain; its full sequence is Tyrosine recombinase XerC (299 aa).

Residues Met1–Asn85 form the Core-binding (CB) domain. One can recognise a Tyr recombinase domain in the interval Arg106–Asp285. Catalysis depends on residues Arg146, Lys170, His237, Arg240, and His263. Tyr272 serves as the catalytic O-(3'-phospho-DNA)-tyrosine intermediate.

This sequence belongs to the 'phage' integrase family. XerC subfamily. As to quaternary structure, forms a cyclic heterotetrameric complex composed of two molecules of XerC and two molecules of XerD.

The protein resides in the cytoplasm. Its function is as follows. Site-specific tyrosine recombinase, which acts by catalyzing the cutting and rejoining of the recombining DNA molecules. The XerC-XerD complex is essential to convert dimers of the bacterial chromosome into monomers to permit their segregation at cell division. It also contributes to the segregational stability of plasmids. The polypeptide is Tyrosine recombinase XerC (Pseudomonas putida (strain W619)).